The following is a 346-amino-acid chain: UPF0421 protein OB2406 (346 aa).

The next 4 helical transmembrane spans lie at 16–36, 55–75, 102–122, and 128–148; these read IAVL…VFAV, LIRF…IALF, LLVA…NYVM, and LFTT…LLPP.

The protein belongs to the UPF0421 family.

The protein resides in the cell membrane. The sequence is that of UPF0421 protein OB2406 from Oceanobacillus iheyensis (strain DSM 14371 / CIP 107618 / JCM 11309 / KCTC 3954 / HTE831).